Consider the following 144-residue polypeptide: Large ribosomal subunit protein uL15 (144 aa).

Positions M1–L57 are disordered. The segment covering R21–G31 has biased composition (gly residues).

It belongs to the universal ribosomal protein uL15 family. In terms of assembly, part of the 50S ribosomal subunit.

In terms of biological role, binds to the 23S rRNA. In Pseudomonas aeruginosa (strain LESB58), this protein is Large ribosomal subunit protein uL15.